The chain runs to 310 residues: Probable manganese-dependent inorganic pyrophosphatase (310 aa).

6 residues coordinate Mn(2+): His-9, Asp-13, Asp-15, Asp-75, His-97, and Asp-149.

Belongs to the PPase class C family. Requires Mn(2+) as cofactor.

It is found in the cytoplasm. It carries out the reaction diphosphate + H2O = 2 phosphate + H(+). This Bacillus cytotoxicus (strain DSM 22905 / CIP 110041 / 391-98 / NVH 391-98) protein is Probable manganese-dependent inorganic pyrophosphatase.